Here is a 389-residue protein sequence, read N- to C-terminus: Major outer membrane porin (389 aa).

An N-terminal signal peptide occupies residues 1 to 23; the sequence is MKKLLKSALLSAAFAGSVGSLQA.

Belongs to the chlamydial porin (CP) (TC 1.B.2) family. Part of a disulfide cross-linked outer membrane complex (COMC) composed of the major outer membrane porin (MOMP), the small cysteine-rich protein (OmcA) and the large cysteine-rich periplasmic protein (OmcB).

It is found in the cell outer membrane. In terms of biological role, in elementary bodies (EBs, the infectious stage, which is able to survive outside the host cell) provides the structural integrity of the outer envelope through disulfide cross-links with the small cysteine-rich protein and the large cysteine-rich periplasmic protein. It has been described in publications as the Sarkosyl-insoluble COMC (Chlamydia outer membrane complex), and serves as the functional equivalent of peptidoglycan. Functionally, permits diffusion of specific solutes through the outer membrane. The sequence is that of Major outer membrane porin (ompA) from Chlamydia pneumoniae (Chlamydophila pneumoniae).